Here is a 741-residue protein sequence, read N- to C-terminus: Beta-galactosidase 10 (741 aa).

The signal sequence occupies residues 1 to 29 (MNRVTTESIASTAILVVMVFLFSWRSIEA). Asn31 carries an N-linked (GlcNAc...) asparagine glycan. Glu188 serves as the catalytic Proton donor. Glu257 acts as the Nucleophile in catalysis. 5 N-linked (GlcNAc...) asparagine glycosylation sites follow: Asn358, Asn396, Asn469, Asn525, and Asn583.

It belongs to the glycosyl hydrolase 35 family. In terms of tissue distribution, ubiquitous.

The protein localises to the secreted. It is found in the extracellular space. The protein resides in the apoplast. It carries out the reaction Hydrolysis of terminal non-reducing beta-D-galactose residues in beta-D-galactosides.. The chain is Beta-galactosidase 10 (BGAL10) from Arabidopsis thaliana (Mouse-ear cress).